Reading from the N-terminus, the 479-residue chain is Spindly-like protein spdl-1 (479 aa).

Coiled-coil stretches lie at residues 4-180, 210-250, and 321-357; these read DEEK…EGEL, EEDL…RFNV, and LMKDNEKYVTIIRGLQQEVENLKADIVQLQFDNKCAH.

Interacts with Zwilch homolog zwl-1, a component of the RZZ complex. Interacts with mdf-1 and mdf-2.

The protein localises to the chromosome. It localises to the centromere. It is found in the kinetochore. The protein resides in the cytoplasm. Its subcellular location is the cytoskeleton. The protein localises to the spindle pole. Functionally, transient kinetochore component required for chromosome and spindle pole alignment and chromosome segregation during mitosis. Functions downstream of the RZZ complex to mediate kinetochore-microtubule attachments and nuclear envelope breakdown during cell division. Required for kinetochore assembly and localizes the checkpoint proteins mdf-1 and mdf-2, dynein and dynactin to unattached kinetochores. Dynein is believed to control the initial lateral interaction between the kinetochore and spindle microtubules and to facilitate the subsequent formation of end-on kinetochore-microtubule attachments mediated by the NDC80 complex. Required for embryonic development. The sequence is that of Spindly-like protein spdl-1 from Caenorhabditis elegans.